A 145-amino-acid polypeptide reads, in one-letter code: Large ribosomal subunit protein uL16 (145 aa).

The protein belongs to the universal ribosomal protein uL16 family. As to quaternary structure, part of the 50S ribosomal subunit.

Functionally, binds 23S rRNA and is also seen to make contacts with the A and possibly P site tRNAs. The sequence is that of Large ribosomal subunit protein uL16 from Lachnospira eligens (strain ATCC 27750 / DSM 3376 / VPI C15-48 / C15-B4) (Eubacterium eligens).